A 227-amino-acid polypeptide reads, in one-letter code: Cytochrome c oxidase subunit 2 (227 aa).

Residues 1–14 (MAYPFQLGLQDATS) lie on the Mitochondrial intermembrane side of the membrane. Residues 15–45 (PIMEELLHFHDHTLMIVFLISSLVLYIITLM) traverse the membrane as a helical segment. The Mitochondrial matrix portion of the chain corresponds to 46–59 (LTTKLTHTSTMDAQ). A helical membrane pass occupies residues 60-87 (EVETVWTILPAIILVLIALPSLRILYMM). The Mitochondrial intermembrane portion of the chain corresponds to 88–227 (DEINNPSLTV…YFETWSALMV (140 aa)). His-161, Cys-196, Glu-198, Cys-200, His-204, and Met-207 together coordinate Cu cation. Glu-198 lines the Mg(2+) pocket. A Phosphotyrosine modification is found at Tyr-218.

This sequence belongs to the cytochrome c oxidase subunit 2 family. Component of the cytochrome c oxidase (complex IV, CIV), a multisubunit enzyme composed of 14 subunits. The complex is composed of a catalytic core of 3 subunits MT-CO1, MT-CO2 and MT-CO3, encoded in the mitochondrial DNA, and 11 supernumerary subunits COX4I, COX5A, COX5B, COX6A, COX6B, COX6C, COX7A, COX7B, COX7C, COX8 and NDUFA4, which are encoded in the nuclear genome. The complex exists as a monomer or a dimer and forms supercomplexes (SCs) in the inner mitochondrial membrane with NADH-ubiquinone oxidoreductase (complex I, CI) and ubiquinol-cytochrome c oxidoreductase (cytochrome b-c1 complex, complex III, CIII), resulting in different assemblies (supercomplex SCI(1)III(2)IV(1) and megacomplex MCI(2)III(2)IV(2)). Found in a complex with TMEM177, COA6, COX18, COX20, SCO1 and SCO2. Interacts with TMEM177 in a COX20-dependent manner. Interacts with COX20. Interacts with COX16. It depends on Cu cation as a cofactor.

It is found in the mitochondrion inner membrane. The enzyme catalyses 4 Fe(II)-[cytochrome c] + O2 + 8 H(+)(in) = 4 Fe(III)-[cytochrome c] + 2 H2O + 4 H(+)(out). Its function is as follows. Component of the cytochrome c oxidase, the last enzyme in the mitochondrial electron transport chain which drives oxidative phosphorylation. The respiratory chain contains 3 multisubunit complexes succinate dehydrogenase (complex II, CII), ubiquinol-cytochrome c oxidoreductase (cytochrome b-c1 complex, complex III, CIII) and cytochrome c oxidase (complex IV, CIV), that cooperate to transfer electrons derived from NADH and succinate to molecular oxygen, creating an electrochemical gradient over the inner membrane that drives transmembrane transport and the ATP synthase. Cytochrome c oxidase is the component of the respiratory chain that catalyzes the reduction of oxygen to water. Electrons originating from reduced cytochrome c in the intermembrane space (IMS) are transferred via the dinuclear copper A center (CU(A)) of subunit 2 and heme A of subunit 1 to the active site in subunit 1, a binuclear center (BNC) formed by heme A3 and copper B (CU(B)). The BNC reduces molecular oxygen to 2 water molecules using 4 electrons from cytochrome c in the IMS and 4 protons from the mitochondrial matrix. The polypeptide is Cytochrome c oxidase subunit 2 (MT-CO2) (Vulpes zerda (Fennec fox)).